A 1581-amino-acid chain; its full sequence is Laminin subunit gamma-3 (1581 aa).

The first 28 residues, 1 to 28 (MAVSRVLSLLATVASMALVIQETHFAAG), serve as a signal peptide directing secretion. Residues 40 to 279 (RAQRCLPEFE…AVSDFSVGGR (240 aa)) form the Laminin N-terminal domain. Residue asparagine 128 is glycosylated (N-linked (GlcNAc...) asparagine). Disulfide bonds link cysteine 280-cysteine 289, cysteine 282-cysteine 299, cysteine 301-cysteine 310, cysteine 313-cysteine 333, cysteine 336-cysteine 345, cysteine 338-cysteine 361, cysteine 364-cysteine 373, cysteine 376-cysteine 389, cysteine 392-cysteine 404, cysteine 394-cysteine 410, cysteine 412-cysteine 421, cysteine 424-cysteine 436, cysteine 439-cysteine 450, cysteine 441-cysteine 457, cysteine 459-cysteine 468, and cysteine 471-cysteine 486. Laminin EGF-like domains lie at 280-335 (CKCN…ECLP), 336-391 (CNCS…PCQP), 392-438 (CDCH…GCRP), and 439-488 (CACN…GCSS). Asparagine 304 carries N-linked (GlcNAc...) asparagine glycosylation. Asparagine 337 carries N-linked (GlcNAc...) asparagine glycosylation. One can recognise a Laminin EGF-like 5; first part domain in the interval 489 to 498 (CFCYGHSKVC). The Laminin IV type A domain maps to 508–684 (HIRSDFRHGA…LAPPASWVET (177 aa)). An N-linked (GlcNAc...) asparagine glycan is attached at asparagine 640. One can recognise a Laminin EGF-like 5; second part domain in the interval 685 to 718 (CLCPQGYTGQFCEFCALGYKREIPHGGPYANCIP). Intrachain disulfides connect cysteine 719-cysteine 727, cysteine 721-cysteine 734, cysteine 736-cysteine 745, cysteine 748-cysteine 764, cysteine 767-cysteine 775, cysteine 769-cysteine 786, cysteine 789-cysteine 798, cysteine 801-cysteine 819, cysteine 822-cysteine 836, cysteine 824-cysteine 843, cysteine 846-cysteine 855, cysteine 858-cysteine 875, cysteine 878-cysteine 891, cysteine 880-cysteine 898, cysteine 900-cysteine 909, cysteine 912-cysteine 925, cysteine 928-cysteine 940, cysteine 930-cysteine 947, cysteine 949-cysteine 958, cysteine 961-cysteine 973, cysteine 976-cysteine 988, cysteine 978-cysteine 994, cysteine 996-cysteine 1005, and cysteine 1008-cysteine 1021. Laminin EGF-like domains follow at residues 719-766 (CTCN…DCQP), 767-821 (CPCP…PCRR), 822-877 (CQCS…KCAP), 878-927 (CSCD…GCQS), 928-975 (CKCH…GCRD), and 976-1024 (CRCS…CQEC). The N-linked (GlcNAc...) asparagine glycan is linked to asparagine 849. Asparagine 991 is a glycosylation site (N-linked (GlcNAc...) asparagine). The segment at 1025-1581 (PTCYALVKEE…LSSLPENCAS (557 aa)) is domain II and I. 2 coiled-coil regions span residues 1029-1046 (ALVK…MLME) and 1112-1153 (VHCA…LASL). 2 N-linked (GlcNAc...) asparagine glycosylation sites follow: asparagine 1162 and asparagine 1196. Residues 1208 to 1231 (RVASEAQQELEDRYQEVQAAQTAL) are a coiled coil. A glycan (N-linked (GlcNAc...) asparagine) is linked at asparagine 1320. The disordered stretch occupies residues 1382 to 1413 (KRKTKQAERMLGNAASLSSSTKKKSKEAELMS). Coiled-coil stretches lie at residues 1438-1468 (ASQT…AKQV) and 1510-1575 (AQTL…LSSL). Asparagine 1514 carries an N-linked (GlcNAc...) asparagine glycan.

Laminin is a complex glycoprotein, consisting of three different polypeptide chains (alpha, beta, gamma), which are bound to each other by disulfide bonds into a cross-shaped molecule comprising one long and three short arms with globules at each end. Gamma-3 is a subunit of laminin-12 (laminin-213), laminin-14 (laminin-423) and laminin-15 (laminin-523). In terms of tissue distribution, strongly expressed in capillaries and arterioles of kidney as well as in interstitial Leydig cells of testis.

The protein localises to the secreted. It localises to the extracellular space. Its subcellular location is the extracellular matrix. It is found in the basement membrane. Its function is as follows. Binding to cells via a high affinity receptor, laminin is thought to mediate the attachment, migration and organization of cells into tissues during embryonic development by interacting with other extracellular matrix components. The protein is Laminin subunit gamma-3 (Lamc3) of Mus musculus (Mouse).